The primary structure comprises 188 residues: Methionine aminopeptidase (188 aa).

Position 60 (H60) interacts with substrate. A divalent metal cation contacts are provided by D80, D91, and H164. H172 contacts substrate.

This sequence belongs to the peptidase M24A family. Methionine aminopeptidase archaeal type 2 subfamily. Monomer. Requires Co(2+) as cofactor. Zn(2+) serves as cofactor. The cofactor is Mn(2+). It depends on Fe(2+) as a cofactor.

It catalyses the reaction Release of N-terminal amino acids, preferentially methionine, from peptides and arylamides.. Removes the N-terminal methionine from nascent proteins. The N-terminal methionine is often cleaved when the second residue in the primary sequence is small and uncharged (Met-Ala-, Cys, Gly, Pro, Ser, Thr, or Val). The chain is Methionine aminopeptidase (map) from Methanothermus fervidus.